Consider the following 282-residue polypeptide: Benzoyl-CoA reductase subunit D (282 aa).

Cys130 and Cys169 together coordinate [4Fe-4S] cluster.

As to quaternary structure, heterotetramer composed of A, B, C, and D subunits. The cofactor is [4Fe-4S] cluster.

The enzyme catalyses cyclohexa-1,5-diene-1-carbonyl-CoA + oxidized 2[4Fe-4S]-[ferredoxin] + 2 ADP + 2 phosphate = reduced 2[4Fe-4S]-[ferredoxin] + benzoyl-CoA + 2 ATP + 2 H2O. The catalysed reaction is 3-hydroxybenzoyl-CoA + AH2 + 2 ATP + 2 H2O = 3-hydroxycyclohexa-1,5-diene-1-carbonyl-CoA + A + 2 ADP + 2 phosphate + 2 H(+). Functionally, catalyzes the anaerobic reduction of benzoyl-CoA and 3-hydroxybenzoyl-CoA to form cyclohexa-1,5-diene-1-carbonyl-CoA and 3-hydroxycyclohexa-1,5-diene-1-carbonyl-CoA, respectively. The enzyme also reduces other benzoyl-CoA analogs with small substituents at the aromatic ring. The chain is Benzoyl-CoA reductase subunit D (bcrD) from Thauera aromatica.